Here is a 368-residue protein sequence, read N- to C-terminus: Agmatine deiminase (368 aa).

The Amidino-cysteine intermediate role is filled by Cys357.

It belongs to the agmatine deiminase family. In terms of assembly, homodimer.

It catalyses the reaction agmatine + H2O = N-carbamoylputrescine + NH4(+). It participates in amine and polyamine biosynthesis; putrescine biosynthesis via agmatine pathway; N-carbamoylputrescine from agmatine: step 1/1. Functionally, mediates the hydrolysis of agmatine into N-carbamoylputrescine in the arginine decarboxylase (ADC) pathway of putrescine biosynthesis, a basic polyamine. The sequence is that of Agmatine deiminase from Pseudomonas syringae pv. tomato (strain ATCC BAA-871 / DC3000).